The sequence spans 281 residues: Bifunctional protein FolD (281 aa).

NADP(+) is bound by residues 165 to 167 (GRS) and serine 190.

Belongs to the tetrahydrofolate dehydrogenase/cyclohydrolase family. Homodimer.

The enzyme catalyses (6R)-5,10-methylene-5,6,7,8-tetrahydrofolate + NADP(+) = (6R)-5,10-methenyltetrahydrofolate + NADPH. It catalyses the reaction (6R)-5,10-methenyltetrahydrofolate + H2O = (6R)-10-formyltetrahydrofolate + H(+). It functions in the pathway one-carbon metabolism; tetrahydrofolate interconversion. In terms of biological role, catalyzes the oxidation of 5,10-methylenetetrahydrofolate to 5,10-methenyltetrahydrofolate and then the hydrolysis of 5,10-methenyltetrahydrofolate to 10-formyltetrahydrofolate. The chain is Bifunctional protein FolD from Polaromonas sp. (strain JS666 / ATCC BAA-500).